The sequence spans 170 residues: Myosin regulatory light chain 2, skeletal muscle isoform type 1 (170 aa).

At A2 the chain carries N,N,N-trimethylalanine. A phosphoserine mark is found at S16 and S17. Phosphothreonine is present on residues T26 and T36. In terms of domain architecture, EF-hand 1 spans 26-61 (TQIQEFKEAFTVIDQNRDGIIDKEDLRDTFAAMGRL). The Ca(2+) site is built by D39, N41, D43, and D50. The residue at position 76 (S76) is a Phosphoserine. EF-hand domains are found at residues 96 to 131 (DPED…QCDR) and 132 to 167 (FSQE…GDAK). A Phosphothreonine modification is found at T102.

In terms of assembly, myosin is a hexamer of 2 heavy chains and 4 light chains.

The polypeptide is Myosin regulatory light chain 2, skeletal muscle isoform type 1 (Oryctolagus cuniculus (Rabbit)).